The primary structure comprises 246 residues: Probable septum site-determining protein MinC (246 aa).

The segment at 116 to 140 (AAVSPPPPPPARAEPAPPAARPAPG) is disordered. The span at 119 to 136 (SPPPPPPARAEPAPPAAR) shows a compositional bias: pro residues.

It belongs to the MinC family. In terms of assembly, interacts with MinD and FtsZ.

Functionally, cell division inhibitor that blocks the formation of polar Z ring septums. Rapidly oscillates between the poles of the cell to destabilize FtsZ filaments that have formed before they mature into polar Z rings. Prevents FtsZ polymerization. This Xanthomonas oryzae pv. oryzae (strain MAFF 311018) protein is Probable septum site-determining protein MinC.